A 420-amino-acid polypeptide reads, in one-letter code: Protein disulfide isomerase CRELD1 (420 aa).

Positions 1 to 29 (MAPRSSRGIAPAMLCGLSLFLGFPGLVWV) are cleaved as a signal peptide. Topologically, residues 30-362 (QISVPPQSSP…GFFSEMTEDE (333 aa)) are extracellular. Residues 46-49 (CHTC) carry the CXXC motif. 4 cysteine pairs are disulfide-bonded: C46–C49, C155–C169, C163–C181, and C183–C192. In terms of domain architecture, EGF-like 1 spans 153-193 (LPCPGGAERPCGGYGHCEGEGTRGGSGHCDCQAGYGGEACG). N-linked (GlcNAc...) asparagine glycosylation is present at N205. 2 FU repeats span residues 208–255 (HLVC…ERAS) and 268–315 (SYEC…AVCP). Residues 278-281 (CLGC) carry the CXXC motif. 4 cysteine pairs are disulfide-bonded: C278/C281, C309/C321, C314/C330, and C332/C343. An EGF-like 2; calcium-binding domain is found at 305–344 (DVDECETAVCPGENQQCENTEGSYRCICADGYKQMEGICV). Residues 363 to 383 (LVVLQQMFFGVIICALATLAA) form a helical membrane-spanning segment. Residue K384 is a topological domain, cytoplasmic. A helical membrane pass occupies residues 385–405 (GDLVFTAIFIGAVAAMTGYWL). Residues 406–420 (SERSDRVLEGFIKGR) are Extracellular-facing.

Belongs to the CRELD family.

It is found in the membrane. The catalysed reaction is Catalyzes the rearrangement of -S-S- bonds in proteins.. Its function is as follows. Protein disulfide isomerase. Promotes the localization of acetylcholine receptors (AChRs) to the plasma membrane. This Bos taurus (Bovine) protein is Protein disulfide isomerase CRELD1 (CRELD1).